The following is a 156-amino-acid chain: 6,7-dimethyl-8-ribityllumazine synthase (156 aa).

5-amino-6-(D-ribitylamino)uracil-binding positions include Phe-22, 57 to 59, and 81 to 83; these read AVE and CVI. A (2S)-2-hydroxy-3-oxobutyl phosphate-binding site is contributed by 86 to 87; sequence GT. The Proton donor role is filled by His-89. Phe-114 contributes to the 5-amino-6-(D-ribitylamino)uracil binding site. Residue Arg-128 coordinates (2S)-2-hydroxy-3-oxobutyl phosphate.

Belongs to the DMRL synthase family. In terms of assembly, forms an icosahedral capsid composed of 60 subunits, arranged as a dodecamer of pentamers.

It catalyses the reaction (2S)-2-hydroxy-3-oxobutyl phosphate + 5-amino-6-(D-ribitylamino)uracil = 6,7-dimethyl-8-(1-D-ribityl)lumazine + phosphate + 2 H2O + H(+). Its pathway is cofactor biosynthesis; riboflavin biosynthesis; riboflavin from 2-hydroxy-3-oxobutyl phosphate and 5-amino-6-(D-ribitylamino)uracil: step 1/2. Functionally, catalyzes the formation of 6,7-dimethyl-8-ribityllumazine by condensation of 5-amino-6-(D-ribitylamino)uracil with 3,4-dihydroxy-2-butanone 4-phosphate. This is the penultimate step in the biosynthesis of riboflavin. In Tolumonas auensis (strain DSM 9187 / NBRC 110442 / TA 4), this protein is 6,7-dimethyl-8-ribityllumazine synthase.